The sequence spans 694 residues: DNA-directed RNA polymerase subunit beta' (694 aa).

Zn(2+)-binding residues include Cys-69, Cys-71, Cys-87, and Cys-90. Residues Asp-489, Asp-491, and Asp-493 each contribute to the Mg(2+) site.

The protein belongs to the RNA polymerase beta' chain family. RpoC1 subfamily. In terms of assembly, in plastids the minimal PEP RNA polymerase catalytic core is composed of four subunits: alpha, beta, beta', and beta''. When a (nuclear-encoded) sigma factor is associated with the core the holoenzyme is formed, which can initiate transcription. It depends on Mg(2+) as a cofactor. The cofactor is Zn(2+).

It localises to the plastid. It is found in the chloroplast. It catalyses the reaction RNA(n) + a ribonucleoside 5'-triphosphate = RNA(n+1) + diphosphate. In terms of biological role, DNA-dependent RNA polymerase catalyzes the transcription of DNA into RNA using the four ribonucleoside triphosphates as substrates. The sequence is that of DNA-directed RNA polymerase subunit beta' from Adiantum capillus-veneris (Maidenhair fern).